Reading from the N-terminus, the 70-residue chain is Large ribosomal subunit protein bL31 (70 aa).

Zn(2+) contacts are provided by Cys-16, Cys-18, Cys-37, and Cys-40.

Belongs to the bacterial ribosomal protein bL31 family. Type A subfamily. Part of the 50S ribosomal subunit. The cofactor is Zn(2+).

Its function is as follows. Binds the 23S rRNA. The polypeptide is Large ribosomal subunit protein bL31 (Shewanella woodyi (strain ATCC 51908 / MS32)).